The following is a 568-amino-acid chain: Dihydroxy-acid dehydratase (568 aa).

Cys59 lines the [2Fe-2S] cluster pocket. Residue Asp91 coordinates Mg(2+). Cys132 contributes to the [2Fe-2S] cluster binding site. 2 residues coordinate Mg(2+): Asp133 and Lys134. At Lys134 the chain carries N6-carboxylysine. Cys204 lines the [2Fe-2S] cluster pocket. Glu456 provides a ligand contact to Mg(2+). Ser482 serves as the catalytic Proton acceptor.

It belongs to the IlvD/Edd family. As to quaternary structure, homodimer. [2Fe-2S] cluster is required as a cofactor. The cofactor is Mg(2+).

The enzyme catalyses (2R)-2,3-dihydroxy-3-methylbutanoate = 3-methyl-2-oxobutanoate + H2O. It carries out the reaction (2R,3R)-2,3-dihydroxy-3-methylpentanoate = (S)-3-methyl-2-oxopentanoate + H2O. It functions in the pathway amino-acid biosynthesis; L-isoleucine biosynthesis; L-isoleucine from 2-oxobutanoate: step 3/4. It participates in amino-acid biosynthesis; L-valine biosynthesis; L-valine from pyruvate: step 3/4. Functionally, functions in the biosynthesis of branched-chain amino acids. Catalyzes the dehydration of (2R,3R)-2,3-dihydroxy-3-methylpentanoate (2,3-dihydroxy-3-methylvalerate) into 2-oxo-3-methylpentanoate (2-oxo-3-methylvalerate) and of (2R)-2,3-dihydroxy-3-methylbutanoate (2,3-dihydroxyisovalerate) into 2-oxo-3-methylbutanoate (2-oxoisovalerate), the penultimate precursor to L-isoleucine and L-valine, respectively. This Verminephrobacter eiseniae (strain EF01-2) protein is Dihydroxy-acid dehydratase.